Here is a 55-residue protein sequence, read N- to C-terminus: ATP synthase F(0) complex subunit 8 (55 aa).

Residues 4–24 form a helical membrane-spanning segment; that stretch reads LNPHPWFSIFITSWLILIIIL.

It belongs to the ATPase protein 8 family. As to quaternary structure, component of the ATP synthase complex composed at least of ATP5F1A/subunit alpha, ATP5F1B/subunit beta, ATP5MC1/subunit c (homooctomer), MT-ATP6/subunit a, MT-ATP8/subunit 8, ATP5ME/subunit e, ATP5MF/subunit f, ATP5MG/subunit g, ATP5MK/subunit k, ATP5MJ/subunit j, ATP5F1C/subunit gamma, ATP5F1D/subunit delta, ATP5F1E/subunit epsilon, ATP5PF/subunit F6, ATP5PB/subunit b, ATP5PD/subunit d, ATP5PO/subunit OSCP. ATP synthase complex consists of a soluble F(1) head domain (subunits alpha(3) and beta(3)) - the catalytic core - and a membrane F(0) domain - the membrane proton channel (subunits c, a, 8, e, f, g, k and j). These two domains are linked by a central stalk (subunits gamma, delta, and epsilon) rotating inside the F1 region and a stationary peripheral stalk (subunits F6, b, d, and OSCP).

The protein resides in the mitochondrion membrane. Subunit 8, of the mitochondrial membrane ATP synthase complex (F(1)F(0) ATP synthase or Complex V) that produces ATP from ADP in the presence of a proton gradient across the membrane which is generated by electron transport complexes of the respiratory chain. ATP synthase complex consist of a soluble F(1) head domain - the catalytic core - and a membrane F(1) domain - the membrane proton channel. These two domains are linked by a central stalk rotating inside the F(1) region and a stationary peripheral stalk. During catalysis, ATP synthesis in the catalytic domain of F(1) is coupled via a rotary mechanism of the central stalk subunits to proton translocation. In vivo, can only synthesize ATP although its ATP hydrolase activity can be activated artificially in vitro. Part of the complex F(0) domain. This is ATP synthase F(0) complex subunit 8 from Pelomedusa subrufa (African side-necked turtle).